A 114-amino-acid polypeptide reads, in one-letter code: Astacin-like metalloprotease toxin 4 (114 aa).

The Peptidase M12A domain occupies 1–114 (RETNENDYVD…GLLCLFKGSV (114 aa)). Cysteine 17 and cysteine 38 form a disulfide bridge. Histidine 46 contacts Zn(2+). Residue glutamate 47 is part of the active site. The Zn(2+) site is built by histidine 50 and histidine 56. An N-linked (GlcNAc...) asparagine glycan is attached at asparagine 88.

As to quaternary structure, monomer. Zn(2+) serves as cofactor. As to expression, expressed by the venom gland.

It localises to the secreted. Its activity is regulated as follows. Inhibited by 1,10-phenanthroline. Zinc metalloprotease. Provoques deadhesion of endothelial cells from cell cultures, and also degradation of fibronectin, fibrinogen and gelatin in vitro. Its role in the venom is not fully understood but it might act as a spreading factor that facilitates diffusion of other venom toxins. Alternatively, it might be involved in the proteolytic processing of other venom toxins or it might play a role in extra-oral digestion of prey. This Loxosceles laeta (South American recluse spider) protein is Astacin-like metalloprotease toxin 4.